The following is a 658-amino-acid chain: Protein translocase subunit SecA 3 (658 aa).

ATP-binding positions include Gln-111, 129–133, and Asp-536; that span reads GEGKT.

This sequence belongs to the SecA family. In terms of assembly, monomer and homodimer. Part of the essential Sec protein translocation apparatus which comprises SecA, SecYEG and auxiliary proteins SecDF-YajC and YidC.

The protein localises to the cell inner membrane. Its subcellular location is the cytoplasm. The enzyme catalyses ATP + H2O + cellular proteinSide 1 = ADP + phosphate + cellular proteinSide 2.. Functionally, part of the Sec protein translocase complex. Interacts with the SecYEG preprotein conducting channel. Has a central role in coupling the hydrolysis of ATP to the transfer of proteins into and across the cell membrane, serving both as a receptor for the preprotein-SecB complex and as an ATP-driven molecular motor driving the stepwise translocation of polypeptide chains across the membrane. The polypeptide is Protein translocase subunit SecA 3 (Magnetococcus marinus (strain ATCC BAA-1437 / JCM 17883 / MC-1)).